A 255-amino-acid polypeptide reads, in one-letter code: Imidazole glycerol phosphate synthase subunit HisF (255 aa).

Residues Asp13 and Asp132 contribute to the active site.

Belongs to the HisA/HisF family. In terms of assembly, heterodimer of HisH and HisF.

Its subcellular location is the cytoplasm. The catalysed reaction is 5-[(5-phospho-1-deoxy-D-ribulos-1-ylimino)methylamino]-1-(5-phospho-beta-D-ribosyl)imidazole-4-carboxamide + L-glutamine = D-erythro-1-(imidazol-4-yl)glycerol 3-phosphate + 5-amino-1-(5-phospho-beta-D-ribosyl)imidazole-4-carboxamide + L-glutamate + H(+). Its pathway is amino-acid biosynthesis; L-histidine biosynthesis; L-histidine from 5-phospho-alpha-D-ribose 1-diphosphate: step 5/9. In terms of biological role, IGPS catalyzes the conversion of PRFAR and glutamine to IGP, AICAR and glutamate. The HisF subunit catalyzes the cyclization activity that produces IGP and AICAR from PRFAR using the ammonia provided by the HisH subunit. The polypeptide is Imidazole glycerol phosphate synthase subunit HisF (Leptospira biflexa serovar Patoc (strain Patoc 1 / ATCC 23582 / Paris)).